The sequence spans 358 residues: Protein-L-isoaspartate O-methyltransferase domain-containing protein 1 (358 aa).

Residue Gly2 is the site of N-myristoyl glycine attachment. Ser64 is a catalytic residue. AdoMet binding motif regions lie at residues 85–94, 160–164, and 181–191; these read LNLGSGTGYL, YDRIY, and LKVGGILVMPI. Residues 240–250 are BC-box; it reads VRNLQDLARIY. A disordered region spans residues 300 to 339; it reads PLDSEEDERMEDDNKEEEDKDHSEALKPEEPPRNLLREKI. Residues 302-318 are compositionally biased toward acidic residues; the sequence is DSEEDERMEDDNKEEED. Basic and acidic residues predominate over residues 319 to 339; that stretch reads KDHSEALKPEEPPRNLLREKI. A CUL-box region spans residues 342–345; that stretch reads LPLP.

This sequence belongs to the methyltransferase superfamily. L-isoaspartyl/D-aspartyl protein methyltransferase family. In terms of assembly, component of the probable ECS(PCMTD1) E3 ubiquitin-protein ligase complex, at least composed of CUL5, ELOB, ELOC, RBX2 and PCMTD1.

The protein resides in the cytoplasm. The protein localises to the membrane. Functionally, substrate recognition component of an ECS (Elongin BC-CUL5-SOCS-box protein) E3 ubiquitin ligase complex which mediates the ubiquitination and subsequent proteasomal degradation of target proteins. Specifically binds to the methyltransferase cofactor S-adenosylmethionine (AdoMet) via the N-terminal AdoMet binding motif, but does not display methyltransferase activity. May provide an alternate maintenance pathway for modified proteins by acting as a damage-specific E3 ubiquitin ligase adaptor protein. The sequence is that of Protein-L-isoaspartate O-methyltransferase domain-containing protein 1 (PCMTD1) from Gallus gallus (Chicken).